The following is a 305-amino-acid chain: Translation initiation factor eIF2B subunit alpha (305 aa).

This sequence belongs to the eIF-2B alpha/beta/delta subunits family. Component of the translation initiation factor 2B (eIF2B) complex which is a heterodecamer of two sets of five different subunits: alpha, beta, gamma, delta and epsilon. Subunits alpha, beta and delta comprise a regulatory subcomplex and subunits epsilon and gamma comprise a catalytic subcomplex. Within the complex, the hexameric regulatory complex resides at the center, with the two heterodimeric catalytic subcomplexes bound on opposite sides.

Its subcellular location is the cytoplasm. It localises to the cytosol. With respect to regulation, activated by the chemical integrated stress response (ISR) inhibitor ISRIB which stimulates guanine nucleotide exchange factor activity for both phosphorylated and unphosphorylated eIF2. In terms of biological role, acts as a component of the translation initiation factor 2B (eIF2B) complex, which catalyzes the exchange of GDP for GTP on eukaryotic initiation factor 2 (eIF2) gamma subunit. Its guanine nucleotide exchange factor activity is repressed when bound to eIF2 complex phosphorylated on the alpha subunit, thereby limiting the amount of methionyl-initiator methionine tRNA available to the ribosome and consequently global translation is repressed. The chain is Translation initiation factor eIF2B subunit alpha (EIF2B1) from Bos taurus (Bovine).